An 82-amino-acid polypeptide reads, in one-letter code: U-scoloptoxin(21)-Sm3a (82 aa).

The N-terminal stretch at 1–21 is a signal peptide; sequence MKIIALLLMVFLDFIIVNXAE.

Belongs to the scoloptoxin-21 family. As to expression, expressed by the venom gland.

It localises to the secreted. The chain is U-scoloptoxin(21)-Sm3a from Scolopendra morsitans (Tanzanian blue ringleg centipede).